We begin with the raw amino-acid sequence, 182 residues long: Aralkylamine dehydrogenase light chain (182 aa).

The segment at residues M1 to A47 is a signal peptide (tat-type signal). 7 cysteine pairs are disulfide-bonded: C75-C140, C81-C113, C88-C171, C90-C138, C91-C135, C98-C129, and C130-C161. D84 is a binding site for substrate. Residue W109 is the Tryptophylquinone 6'-substrate hemiaminal intermediate of the active site. Residue W109 is modified to Tryptophylquinone. A cross-link (tryptophan tryptophylquinone (Trp-Trp)) is located at residues W109–W160. The Proton acceptor role is filled by D128. N156–V158 lines the substrate pocket.

It belongs to the aromatic amine dehydrogenase light chain family. As to quaternary structure, heterotetramer of two light and two heavy chains. Binds two azurin molecules per heterotetramer. Requires tryptophan tryptophylquinone residue as cofactor. In terms of processing, tryptophan tryptophylquinone (TTQ) is formed by oxidation of the indole ring of a tryptophan to form tryptophylquinone followed by covalent cross-linking with another tryptophan residue. Predicted to be exported by the Tat system. The position of the signal peptide cleavage has been experimentally proven.

The protein resides in the periplasm. The enzyme catalyses an aralkylamine + 2 oxidized [azurin] + H2O = an aromatic aldehyde + 2 reduced [azurin] + NH4(+) + 2 H(+). With respect to regulation, irreversibly inhibited by phenylhydrazine, hydroxylamine, semicarbazide, hydrazine and aminoguanidine. Reversibly inhibited by isonicotinic acid hydrazide (isoniazid) and isonicotinic acid 2-isopropyl hydrazide (iproniazid). In terms of biological role, oxidizes primary aromatic amines and, more slowly, some long-chain aliphatic amines, but not methylamine or ethylamine. Uses azurin as an electron acceptor to transfer electrons from the reduced tryptophylquinone cofactor. The polypeptide is Aralkylamine dehydrogenase light chain (Alcaligenes faecalis).